The chain runs to 384 residues: Putative sarcosine oxidase (384 aa).

6–36 serves as a coordination point for FAD; it reads DVVVVGAGIFGSCTAYNCQKIGLKTLLLEQF. Position 315 is an S-8alpha-FAD cysteine (Cys-315).

Belongs to the MSOX/MTOX family. The cofactor is FAD.

The catalysed reaction is sarcosine + O2 + H2O = formaldehyde + glycine + H2O2. The polypeptide is Putative sarcosine oxidase (Caenorhabditis elegans).